The following is a 327-amino-acid chain: Ornithine carbamoyltransferase, mitochondrial (327 aa).

Carbamoyl phosphate-binding positions include 63–66 (STRT), R114, H141, and Q144. Residues N172, D236, S240, and M241 each coordinate L-ornithine. Residue C276 is the Proton acceptor of the active site. Residues 276–277 (CL) and R303 contribute to the carbamoyl phosphate site.

The protein belongs to the aspartate/ornithine carbamoyltransferase superfamily. OTCase family. Interacts with trx2.

It is found in the mitochondrion matrix. It carries out the reaction carbamoyl phosphate + L-ornithine = L-citrulline + phosphate + H(+). The protein operates within amino-acid biosynthesis; L-arginine biosynthesis; L-arginine from L-ornithine and carbamoyl phosphate: step 1/3. Ornithine carbamoyltransferase involved in the synthesis of arginine from glutamate via ornithine and the urea cycle. The sequence is that of Ornithine carbamoyltransferase, mitochondrial (arg3) from Schizosaccharomyces pombe (strain 972 / ATCC 24843) (Fission yeast).